Here is a 195-residue protein sequence, read N- to C-terminus: CASP-like protein 1B1 (195 aa).

Topologically, residues 1-25 (MDLEKGKKPSEQAAACRIMQVKDKL) are cytoplasmic. A helical membrane pass occupies residues 26 to 46 (ITLQPVVRACVFLATAVAAVI). Over 47–78 (MGLNKQSYTTVVAIVGTRPVTQTFTAKFKDTP) the chain is Extracellular. The chain crosses the membrane as a helical span at residues 79–99 (AFVFFVIANAIASGYNLMVLV). Over 100-114 (TRRILQRRAQSLSVH) the chain is Cytoplasmic. A helical membrane pass occupies residues 115–135 (LLDMVILTLLATGSATAASMA). The Extracellular portion of the chain corresponds to 136–160 (QLGKNGNLHARWNPICDKFGSFCNH). The helical transmembrane segment at 161–181 (GGIALMSSFIGVALMLALNLL) threads the bilayer. Topologically, residues 182-195 (SAAANSPRSNVTGQ) are cytoplasmic.

This sequence belongs to the Casparian strip membrane proteins (CASP) family. As to quaternary structure, homodimer and heterodimers.

It localises to the cell membrane. The chain is CASP-like protein 1B1 from Oryza sativa subsp. indica (Rice).